The sequence spans 93 residues: Large ribosomal subunit protein bL31B (93 aa).

Belongs to the bacterial ribosomal protein bL31 family. Type B subfamily. Part of the 50S ribosomal subunit.

The protein is Large ribosomal subunit protein bL31B of Pseudomonas syringae pv. syringae (strain B728a).